A 264-amino-acid polypeptide reads, in one-letter code: 3-methyl-2-oxobutanoate hydroxymethyltransferase (264 aa).

The Mg(2+) site is built by D45 and D84. 3-methyl-2-oxobutanoate contacts are provided by residues 45-46 (DS), D84, and K112. E114 is a Mg(2+) binding site. The Proton acceptor role is filled by E181.

This sequence belongs to the PanB family. Homodecamer; pentamer of dimers. Mg(2+) serves as cofactor.

Its subcellular location is the cytoplasm. The catalysed reaction is 3-methyl-2-oxobutanoate + (6R)-5,10-methylene-5,6,7,8-tetrahydrofolate + H2O = 2-dehydropantoate + (6S)-5,6,7,8-tetrahydrofolate. It participates in cofactor biosynthesis; (R)-pantothenate biosynthesis; (R)-pantoate from 3-methyl-2-oxobutanoate: step 1/2. Catalyzes the reversible reaction in which hydroxymethyl group from 5,10-methylenetetrahydrofolate is transferred onto alpha-ketoisovalerate to form ketopantoate. This Vibrio atlanticus (strain LGP32) (Vibrio splendidus (strain Mel32)) protein is 3-methyl-2-oxobutanoate hydroxymethyltransferase.